A 21-amino-acid polypeptide reads, in one-letter code: Preblooming protein 2 (21 aa).

Possible mediator for cell division in the blooming process. The chain is Preblooming protein 2 from Prorocentrum triestinum (Red tide alga).